The primary structure comprises 314 residues: Ribosomal RNA small subunit methyltransferase H (314 aa).

S-adenosyl-L-methionine is bound by residues 36 to 38 (GGH), aspartate 56, phenylalanine 82, aspartate 104, and glutamine 111.

It belongs to the methyltransferase superfamily. RsmH family.

It is found in the cytoplasm. It catalyses the reaction cytidine(1402) in 16S rRNA + S-adenosyl-L-methionine = N(4)-methylcytidine(1402) in 16S rRNA + S-adenosyl-L-homocysteine + H(+). Its function is as follows. Specifically methylates the N4 position of cytidine in position 1402 (C1402) of 16S rRNA. The chain is Ribosomal RNA small subunit methyltransferase H from Ectopseudomonas mendocina (strain ymp) (Pseudomonas mendocina).